A 334-amino-acid polypeptide reads, in one-letter code: GTP 3',8-cyclase (334 aa).

Residues 8–244 (RYGRPLRDLR…GEVAQRHAFA (237 aa)) form the Radical SAM core domain. Residue Arg17 participates in GTP binding. [4Fe-4S] cluster contacts are provided by Cys24 and Cys28. Tyr30 provides a ligand contact to S-adenosyl-L-methionine. Cys31 serves as a coordination point for [4Fe-4S] cluster. Arg70 is a binding site for GTP. S-adenosyl-L-methionine is bound at residue Gly74. Position 101 (Thr101) interacts with GTP. Ser125 contributes to the S-adenosyl-L-methionine binding site. A GTP-binding site is contributed by Lys163. Position 197 (Met197) interacts with S-adenosyl-L-methionine. 2 residues coordinate [4Fe-4S] cluster: Cys261 and Cys264. 266-268 (RAR) serves as a coordination point for GTP. [4Fe-4S] cluster is bound at residue Cys278.

This sequence belongs to the radical SAM superfamily. MoaA family. Monomer and homodimer. The cofactor is [4Fe-4S] cluster.

The catalysed reaction is GTP + AH2 + S-adenosyl-L-methionine = (8S)-3',8-cyclo-7,8-dihydroguanosine 5'-triphosphate + 5'-deoxyadenosine + L-methionine + A + H(+). It participates in cofactor biosynthesis; molybdopterin biosynthesis. Its function is as follows. Catalyzes the cyclization of GTP to (8S)-3',8-cyclo-7,8-dihydroguanosine 5'-triphosphate. The protein is GTP 3',8-cyclase of Xanthomonas axonopodis pv. citri (strain 306).